Here is a 321-residue protein sequence, read N- to C-terminus: Lipoyl synthase (321 aa).

The [4Fe-4S] cluster site is built by Cys-68, Cys-73, Cys-79, Cys-94, Cys-98, Cys-101, and Ser-308. A Radical SAM core domain is found at 80 to 297 (FNHGTATFMI…KAYADEIGFT (218 aa)).

This sequence belongs to the radical SAM superfamily. Lipoyl synthase family. [4Fe-4S] cluster is required as a cofactor.

It localises to the cytoplasm. The enzyme catalyses [[Fe-S] cluster scaffold protein carrying a second [4Fe-4S](2+) cluster] + N(6)-octanoyl-L-lysyl-[protein] + 2 oxidized [2Fe-2S]-[ferredoxin] + 2 S-adenosyl-L-methionine + 4 H(+) = [[Fe-S] cluster scaffold protein] + N(6)-[(R)-dihydrolipoyl]-L-lysyl-[protein] + 4 Fe(3+) + 2 hydrogen sulfide + 2 5'-deoxyadenosine + 2 L-methionine + 2 reduced [2Fe-2S]-[ferredoxin]. It participates in protein modification; protein lipoylation via endogenous pathway; protein N(6)-(lipoyl)lysine from octanoyl-[acyl-carrier-protein]: step 2/2. Its function is as follows. Catalyzes the radical-mediated insertion of two sulfur atoms into the C-6 and C-8 positions of the octanoyl moiety bound to the lipoyl domains of lipoate-dependent enzymes, thereby converting the octanoylated domains into lipoylated derivatives. The polypeptide is Lipoyl synthase (Pseudoalteromonas translucida (strain TAC 125)).